Reading from the N-terminus, the 677-residue chain is UvrABC system protein B (677 aa).

In terms of domain architecture, Helicase ATP-binding spans 27–414; it reads ANLGHGVRDQ…SQGVIAEQII (388 aa). 40-47 lines the ATP pocket; sequence GVTGSGKT. Positions 93–116 match the Beta-hairpin motif; that stretch reads YYDYYQPEAYVPASDTYIEKDSSI. One can recognise a Helicase C-terminal domain in the interval 432 to 594; it reads QVDDLLAECR…IEPRTIRKSL (163 aa). Residues 638–673 enclose the UVR domain; sequence AKHIQKLEREMREAAKELEFERAATLRDRIRLLRER.

Belongs to the UvrB family. In terms of assembly, forms a heterotetramer with UvrA during the search for lesions. Interacts with UvrC in an incision complex.

The protein localises to the cytoplasm. Functionally, the UvrABC repair system catalyzes the recognition and processing of DNA lesions. A damage recognition complex composed of 2 UvrA and 2 UvrB subunits scans DNA for abnormalities. Upon binding of the UvrA(2)B(2) complex to a putative damaged site, the DNA wraps around one UvrB monomer. DNA wrap is dependent on ATP binding by UvrB and probably causes local melting of the DNA helix, facilitating insertion of UvrB beta-hairpin between the DNA strands. Then UvrB probes one DNA strand for the presence of a lesion. If a lesion is found the UvrA subunits dissociate and the UvrB-DNA preincision complex is formed. This complex is subsequently bound by UvrC and the second UvrB is released. If no lesion is found, the DNA wraps around the other UvrB subunit that will check the other stand for damage. The sequence is that of UvrABC system protein B from Nitratidesulfovibrio vulgaris (strain ATCC 29579 / DSM 644 / CCUG 34227 / NCIMB 8303 / VKM B-1760 / Hildenborough) (Desulfovibrio vulgaris).